We begin with the raw amino-acid sequence, 613 residues long: Dihydroxy-acid dehydratase (613 aa).

Mg(2+) is bound at residue Asp81. Cys122 serves as a coordination point for [2Fe-2S] cluster. Positions 123 and 124 each coordinate Mg(2+). Residue Lys124 is modified to N6-carboxylysine. Cys193 is a binding site for [2Fe-2S] cluster. Mg(2+) is bound at residue Glu489. The active-site Proton acceptor is Ser515.

This sequence belongs to the IlvD/Edd family. As to quaternary structure, homodimer. [2Fe-2S] cluster is required as a cofactor. Mg(2+) serves as cofactor.

The enzyme catalyses (2R)-2,3-dihydroxy-3-methylbutanoate = 3-methyl-2-oxobutanoate + H2O. It catalyses the reaction (2R,3R)-2,3-dihydroxy-3-methylpentanoate = (S)-3-methyl-2-oxopentanoate + H2O. Its pathway is amino-acid biosynthesis; L-isoleucine biosynthesis; L-isoleucine from 2-oxobutanoate: step 3/4. The protein operates within amino-acid biosynthesis; L-valine biosynthesis; L-valine from pyruvate: step 3/4. Its function is as follows. Functions in the biosynthesis of branched-chain amino acids. Catalyzes the dehydration of (2R,3R)-2,3-dihydroxy-3-methylpentanoate (2,3-dihydroxy-3-methylvalerate) into 2-oxo-3-methylpentanoate (2-oxo-3-methylvalerate) and of (2R)-2,3-dihydroxy-3-methylbutanoate (2,3-dihydroxyisovalerate) into 2-oxo-3-methylbutanoate (2-oxoisovalerate), the penultimate precursor to L-isoleucine and L-valine, respectively. The chain is Dihydroxy-acid dehydratase from Pseudomonas putida (strain ATCC 47054 / DSM 6125 / CFBP 8728 / NCIMB 11950 / KT2440).